A 366-amino-acid chain; its full sequence is Chorismate synthase (366 aa).

2 residues coordinate NADP(+): Arg-48 and Arg-54. FMN contacts are provided by residues Arg-125 to Ser-127, Asn-242 to Ala-243, Gly-287, Lys-302 to Ser-306, and Arg-328.

This sequence belongs to the chorismate synthase family. As to quaternary structure, homotetramer. FMNH2 is required as a cofactor.

It carries out the reaction 5-O-(1-carboxyvinyl)-3-phosphoshikimate = chorismate + phosphate. It functions in the pathway metabolic intermediate biosynthesis; chorismate biosynthesis; chorismate from D-erythrose 4-phosphate and phosphoenolpyruvate: step 7/7. In terms of biological role, catalyzes the anti-1,4-elimination of the C-3 phosphate and the C-6 proR hydrogen from 5-enolpyruvylshikimate-3-phosphate (EPSP) to yield chorismate, which is the branch point compound that serves as the starting substrate for the three terminal pathways of aromatic amino acid biosynthesis. This reaction introduces a second double bond into the aromatic ring system. This is Chorismate synthase from Rhodospirillum rubrum (strain ATCC 11170 / ATH 1.1.1 / DSM 467 / LMG 4362 / NCIMB 8255 / S1).